The chain runs to 158 residues: Ribosome maturation factor RimP (158 aa).

Belongs to the RimP family.

It is found in the cytoplasm. Functionally, required for maturation of 30S ribosomal subunits. The chain is Ribosome maturation factor RimP from Leuconostoc citreum (strain KM20).